Reading from the N-terminus, the 144-residue chain is Transcriptional regulator SlyA (144 aa).

An HTH marR-type domain is found at 2–135 (ESPLGSDLAR…LITLIAKLEH (134 aa)). The H-T-H motif DNA-binding region spans 49–72 (QIQLAKAIGIEQPSLVRTLDQLEE).

The protein belongs to the SlyA family. Homodimer.

In terms of biological role, transcription regulator that can specifically activate or repress expression of target genes. This is Transcriptional regulator SlyA from Shigella boydii serotype 18 (strain CDC 3083-94 / BS512).